The following is a 371-amino-acid chain: MPLKPFAPSEPYTLGVELELQVVSPPGFNLSQDSSTLISALESRVTAGEVKHDITESMLEIATGVCRDINQVAAEFAAMQREILACAQQYHLMISGGGTHPFQKWQRQEVCSSERYARTLELFGYLIKQATVFGQHVHVGCRNGEEAMYLLHGLSRFVPHFVALSASSPYMQGADTGFASSRLNIFSAFPDNGPAPFAADWTQFEKMYARLEGTKVVESIKDLHWDIRPSPGFGTVEVRVMDTPLTLERAINIAGFIQAISHWLLDERPYKHKAEDYLIYRFNRFQACRYGLEGTLTDVSTGEQRTIGEDILRLLDKLERYARPLNASSALEAIHRYVKNNDSDVHRIREFTADGGSLSELVRLNGEIWAA.

The protein belongs to the glutamate--cysteine ligase type 2 family. YbdK subfamily. Homodimer.

The catalysed reaction is L-cysteine + L-glutamate + ATP = gamma-L-glutamyl-L-cysteine + ADP + phosphate + H(+). ATP-dependent carboxylate-amine ligase which exhibits weak glutamate--cysteine ligase activity. The chain is Putative glutamate--cysteine ligase 2 from Cronobacter sakazakii (strain ATCC BAA-894) (Enterobacter sakazakii).